The sequence spans 257 residues: Pyridoxine 5'-phosphate synthase (257 aa).

N16 serves as a coordination point for 3-amino-2-oxopropyl phosphate. 18 to 19 is a 1-deoxy-D-xylulose 5-phosphate binding site; sequence DH. A 3-amino-2-oxopropyl phosphate-binding site is contributed by R27. The active-site Proton acceptor is the H52. Residues R54 and H59 each coordinate 1-deoxy-D-xylulose 5-phosphate. E79 functions as the Proton acceptor in the catalytic mechanism. Residue T109 coordinates 1-deoxy-D-xylulose 5-phosphate. The Proton donor role is filled by H200. 3-amino-2-oxopropyl phosphate contacts are provided by residues G201 and 222 to 223; that span reads GH.

Belongs to the PNP synthase family. In terms of assembly, homooctamer; tetramer of dimers.

The protein resides in the cytoplasm. It catalyses the reaction 3-amino-2-oxopropyl phosphate + 1-deoxy-D-xylulose 5-phosphate = pyridoxine 5'-phosphate + phosphate + 2 H2O + H(+). The protein operates within cofactor biosynthesis; pyridoxine 5'-phosphate biosynthesis; pyridoxine 5'-phosphate from D-erythrose 4-phosphate: step 5/5. Its function is as follows. Catalyzes the complicated ring closure reaction between the two acyclic compounds 1-deoxy-D-xylulose-5-phosphate (DXP) and 3-amino-2-oxopropyl phosphate (1-amino-acetone-3-phosphate or AAP) to form pyridoxine 5'-phosphate (PNP) and inorganic phosphate. This chain is Pyridoxine 5'-phosphate synthase, found in Burkholderia pseudomallei (strain K96243).